A 221-amino-acid chain; its full sequence is U1 small nuclear ribonucleoprotein C (221 aa).

A Matrin-type zinc finger spans residues 4–36; it reads HYCDYCDVFLTHDSVSVRKAHNSGRNHLQNVRE. Residues 80–221 are disordered; sequence GAGPLSGSSD…PHSRTGYGPR (142 aa). A compositionally biased stretch (pro residues) spans 142–158; that stretch reads YSRPPPQGGPYSRPPPD. Positions 178–190 are enriched in low complexity; sequence PLGYGAPLPGAYP. The segment covering 191–204 has biased composition (pro residues); that stretch reads SGPPPNMRGPPPPL.

The protein belongs to the U1 small nuclear ribonucleoprotein C family. In terms of assembly, U1 snRNP is composed of the 7 core Sm proteins B/B', D1, D2, D3, E, F and G that assemble in a heptameric protein ring on the Sm site of the small nuclear RNA to form the core snRNP, and at least 3 U1 snRNP-specific proteins U1-70K, U1-A and U1-C. U1-C interacts with U1 snRNA and the 5' splice-site region of the pre-mRNA.

The protein localises to the nucleus. Component of the spliceosomal U1 snRNP, which is essential for recognition of the pre-mRNA 5' splice-site and the subsequent assembly of the spliceosome. U1-C is directly involved in initial 5' splice-site recognition for both constitutive and regulated alternative splicing. The interaction with the 5' splice-site seems to precede base-pairing between the pre-mRNA and the U1 snRNA. Stimulates commitment or early (E) complex formation by stabilizing the base pairing of the 5' end of the U1 snRNA and the 5' splice-site region. The chain is U1 small nuclear ribonucleoprotein C from Mycosarcoma maydis (Corn smut fungus).